The following is a 124-amino-acid chain: Acidic phospholipase A2 BA1 (124 aa).

7 disulfides stabilise this stretch: C26–C116, C28–C44, C43–C95, C49–C124, C50–C88, C57–C81, and C75–C86. Y27, G29, and G31 together coordinate Ca(2+). H47 is an active-site residue. Ca(2+) is bound at residue D48. D89 is an active-site residue.

This sequence belongs to the phospholipase A2 family. Group II subfamily. D49 sub-subfamily. Ca(2+) is required as a cofactor. As to expression, expressed by the venom gland.

The protein localises to the secreted. The catalysed reaction is a 1,2-diacyl-sn-glycero-3-phosphocholine + H2O = a 1-acyl-sn-glycero-3-phosphocholine + a fatty acid + H(+). PLA2 catalyzes the calcium-dependent hydrolysis of the 2-acyl groups in 3-sn-phosphoglycerides. The protein is Acidic phospholipase A2 BA1 of Gloydius halys (Chinese water mocassin).